Consider the following 520-residue polypeptide: Ribonuclease Y (520 aa).

A helical transmembrane segment spans residues 4 to 24 (TVWILISILLATVGAVVGFFV). Residues 210 to 273 (TVSVVNLPND…ETARIALDKL (64 aa)) form the KH domain. One can recognise an HD domain in the interval 336–429 (VLKHSMEVAY…VAAADALSAA (94 aa)).

The protein belongs to the RNase Y family.

The protein resides in the cell membrane. Endoribonuclease that initiates mRNA decay. The sequence is that of Ribonuclease Y from Bacillus cereus (strain ZK / E33L).